The following is a 171-amino-acid chain: 2-C-methyl-D-erythritol 2,4-cyclodiphosphate synthase (171 aa).

A divalent metal cation contacts are provided by D8 and H10. Residues 8–10 (DVH) and 34–35 (HS) contribute to the 4-CDP-2-C-methyl-D-erythritol 2-phosphate site. A divalent metal cation is bound at residue H42. 4-CDP-2-C-methyl-D-erythritol 2-phosphate-binding positions include 56-58 (DIG), 61-65 (FPDTD), 132-135 (TTTE), F139, and R142.

Belongs to the IspF family. Homotrimer. It depends on a divalent metal cation as a cofactor.

It catalyses the reaction 4-CDP-2-C-methyl-D-erythritol 2-phosphate = 2-C-methyl-D-erythritol 2,4-cyclic diphosphate + CMP. It participates in isoprenoid biosynthesis; isopentenyl diphosphate biosynthesis via DXP pathway; isopentenyl diphosphate from 1-deoxy-D-xylulose 5-phosphate: step 4/6. Its function is as follows. Involved in the biosynthesis of isopentenyl diphosphate (IPP) and dimethylallyl diphosphate (DMAPP), two major building blocks of isoprenoid compounds. Catalyzes the conversion of 4-diphosphocytidyl-2-C-methyl-D-erythritol 2-phosphate (CDP-ME2P) to 2-C-methyl-D-erythritol 2,4-cyclodiphosphate (ME-CPP) with a corresponding release of cytidine 5-monophosphate (CMP). This Geotalea daltonii (strain DSM 22248 / JCM 15807 / FRC-32) (Geobacter daltonii) protein is 2-C-methyl-D-erythritol 2,4-cyclodiphosphate synthase.